The sequence spans 232 residues: Orotidine 5'-phosphate decarboxylase (232 aa).

Substrate-binding positions include D13, K35, D62–T71, T122, R182, Q191, G211, and R212. Residue K64 is the Proton donor of the active site.

Belongs to the OMP decarboxylase family. Type 1 subfamily. As to quaternary structure, homodimer.

It catalyses the reaction orotidine 5'-phosphate + H(+) = UMP + CO2. It functions in the pathway pyrimidine metabolism; UMP biosynthesis via de novo pathway; UMP from orotate: step 2/2. In terms of biological role, catalyzes the decarboxylation of orotidine 5'-monophosphate (OMP) to uridine 5'-monophosphate (UMP). This is Orotidine 5'-phosphate decarboxylase from Pseudomonas paraeruginosa (strain DSM 24068 / PA7) (Pseudomonas aeruginosa (strain PA7)).